We begin with the raw amino-acid sequence, 985 residues long: Regulator of telomere elongation helicase 1 homolog (985 aa).

Residues 7–303 (AGIPVHFPFE…QDMAGDEPKD (297 aa)) form the Helicase ATP-binding domain. Position 42–49 (42–49 (SPTGTGKT)) interacts with ATP. [4Fe-4S] cluster is bound by residues Cys-146, Cys-164, Cys-173, and Cys-209. The short motif at 252–255 (DEAH) is the DEAH box element. The segment at 863–883 (VKIHKRERSSPTAPESSSQVT) is disordered. Over residues 872–882 (SPTAPESSSQV) the composition is skewed to polar residues. Thr-874 is subject to Phosphothreonine.

It belongs to the helicase family. RAD3/XPD subfamily. Expressed in both male germline and somatic cells (at protein level). Expressed in ovarian germline stem cells (at protein level). Expressed in adult testes (at protein level). Expressed in the germarium including germline stem cells.

The protein resides in the nucleus. Its subcellular location is the chromosome. The catalysed reaction is ATP + H2O = ADP + phosphate + H(+). A probable ATP-dependent DNA helicase implicated in DNA repair and the maintenance of genomic stability. Acts as an anti-recombinase to counteract toxic recombination and limit crossover during meiosis. Regulates meiotic recombination and crossover homeostasis by physically dissociating strand invasion events and thereby promotes noncrossover repair by meiotic synthesis dependent strand annealing (SDSA) as well as disassembly of D loop recombination intermediates. In male germline stem cells (GSCs), plays a role in GSCs maintenance during larval germline development by modulating the expression of genes such as Stat92E and preventing DNA damage-induced checkpoint activation. May play a role in female germline stem cell maintenance. This chain is Regulator of telomere elongation helicase 1 homolog, found in Drosophila melanogaster (Fruit fly).